The primary structure comprises 269 residues: Putative pyruvate, phosphate dikinase regulatory protein (269 aa).

151–158 (GVSRSSKT) contributes to the ADP binding site.

It belongs to the pyruvate, phosphate/water dikinase regulatory protein family. PDRP subfamily.

It catalyses the reaction N(tele)-phospho-L-histidyl/L-threonyl-[pyruvate, phosphate dikinase] + ADP = N(tele)-phospho-L-histidyl/O-phospho-L-threonyl-[pyruvate, phosphate dikinase] + AMP + H(+). The enzyme catalyses N(tele)-phospho-L-histidyl/O-phospho-L-threonyl-[pyruvate, phosphate dikinase] + phosphate + H(+) = N(tele)-phospho-L-histidyl/L-threonyl-[pyruvate, phosphate dikinase] + diphosphate. Its function is as follows. Bifunctional serine/threonine kinase and phosphorylase involved in the regulation of the pyruvate, phosphate dikinase (PPDK) by catalyzing its phosphorylation/dephosphorylation. The protein is Putative pyruvate, phosphate dikinase regulatory protein of Geobacter metallireducens (strain ATCC 53774 / DSM 7210 / GS-15).